The sequence spans 175 residues: Lipoprotein signal peptidase (175 aa).

The next 4 membrane-spanning stretches (helical) occupy residues Leu25 to Val45, Val56 to Ala76, Trp81 to Leu101, and Phe110 to Val130. Catalysis depends on residues Asp136 and Asp154. Residues His146–Val166 form a helical membrane-spanning segment.

This sequence belongs to the peptidase A8 family.

The protein localises to the cell inner membrane. The catalysed reaction is Release of signal peptides from bacterial membrane prolipoproteins. Hydrolyzes -Xaa-Yaa-Zaa-|-(S,diacylglyceryl)Cys-, in which Xaa is hydrophobic (preferably Leu), and Yaa (Ala or Ser) and Zaa (Gly or Ala) have small, neutral side chains.. It functions in the pathway protein modification; lipoprotein biosynthesis (signal peptide cleavage). Its function is as follows. This protein specifically catalyzes the removal of signal peptides from prolipoproteins. The protein is Lipoprotein signal peptidase of Cupriavidus necator (strain ATCC 17699 / DSM 428 / KCTC 22496 / NCIMB 10442 / H16 / Stanier 337) (Ralstonia eutropha).